We begin with the raw amino-acid sequence, 296 residues long: Phosphoribosylaminoimidazole-succinocarboxamide synthase (296 aa).

The protein belongs to the SAICAR synthetase family.

It carries out the reaction 5-amino-1-(5-phospho-D-ribosyl)imidazole-4-carboxylate + L-aspartate + ATP = (2S)-2-[5-amino-1-(5-phospho-beta-D-ribosyl)imidazole-4-carboxamido]succinate + ADP + phosphate + 2 H(+). Its pathway is purine metabolism; IMP biosynthesis via de novo pathway; 5-amino-1-(5-phospho-D-ribosyl)imidazole-4-carboxamide from 5-amino-1-(5-phospho-D-ribosyl)imidazole-4-carboxylate: step 1/2. This Geobacter sulfurreducens (strain ATCC 51573 / DSM 12127 / PCA) protein is Phosphoribosylaminoimidazole-succinocarboxamide synthase.